A 577-amino-acid chain; its full sequence is Laccase-25 (577 aa).

An N-terminal signal peptide occupies residues 1–22 (MTLHWSLLLFIAIALVSSVAQA). 2 consecutive Plastocyanin-like domains span residues 30–147 (NVGN…PRGG) and 158–313 (KEHV…YAGA). N33 carries an N-linked (GlcNAc...) asparagine glycan. Cu cation-binding residues include H81 and H83. N-linked (GlcNAc...) asparagine glycosylation occurs at N109. H126 and H128 together coordinate Cu cation. N-linked (GlcNAc...) asparagine glycans are attached at residues N169, N203, N208, N218, N332, N383, N396, N404, N441, and N459. The Plastocyanin-like 3 domain maps to 423–560 (DFPDTPPVVF…AMVLEVLDGP (138 aa)). H477, H480, H482, H539, C540, H541, and H545 together coordinate Cu cation.

The protein belongs to the multicopper oxidase family. It depends on Cu cation as a cofactor.

It is found in the secreted. The protein resides in the extracellular space. Its subcellular location is the apoplast. It catalyses the reaction 4 hydroquinone + O2 = 4 benzosemiquinone + 2 H2O. Lignin degradation and detoxification of lignin-derived products. The sequence is that of Laccase-25 (LAC25) from Oryza sativa subsp. japonica (Rice).